The sequence spans 75 residues: UPF0352 protein YejL (75 aa).

Belongs to the UPF0352 family.

This Salmonella agona (strain SL483) protein is UPF0352 protein YejL.